A 254-amino-acid chain; its full sequence is 3-deoxy-manno-octulosonate cytidylyltransferase (254 aa).

Belongs to the KdsB family.

The protein resides in the cytoplasm. The catalysed reaction is 3-deoxy-alpha-D-manno-oct-2-ulosonate + CTP = CMP-3-deoxy-beta-D-manno-octulosonate + diphosphate. It participates in nucleotide-sugar biosynthesis; CMP-3-deoxy-D-manno-octulosonate biosynthesis; CMP-3-deoxy-D-manno-octulosonate from 3-deoxy-D-manno-octulosonate and CTP: step 1/1. Its pathway is bacterial outer membrane biogenesis; lipopolysaccharide biosynthesis. Its function is as follows. Activates KDO (a required 8-carbon sugar) for incorporation into bacterial lipopolysaccharide in Gram-negative bacteria. The sequence is that of 3-deoxy-manno-octulosonate cytidylyltransferase from Ectopseudomonas mendocina (strain ymp) (Pseudomonas mendocina).